Here is a 62-residue protein sequence, read N- to C-terminus: Photosystem II reaction center protein Z (62 aa).

The next 2 helical transmembrane spans lie at 8 to 28 and 41 to 61; these read TLFAFVGLSFLLVVGVPVVFA and FSGIGFWFLLVFAVGILNSFV.

It belongs to the PsbZ family. As to quaternary structure, PSII is composed of 1 copy each of membrane proteins PsbA, PsbB, PsbC, PsbD, PsbE, PsbF, PsbH, PsbI, PsbJ, PsbK, PsbL, PsbM, PsbT, PsbY, PsbZ, Psb30/Ycf12, at least 3 peripheral proteins of the oxygen-evolving complex and a large number of cofactors. It forms dimeric complexes.

It localises to the plastid. It is found in the chloroplast thylakoid membrane. In terms of biological role, may control the interaction of photosystem II (PSII) cores with the light-harvesting antenna, regulates electron flow through the 2 photosystem reaction centers. PSII is a light-driven water plastoquinone oxidoreductase, using light energy to abstract electrons from H(2)O, generating a proton gradient subsequently used for ATP formation. This is Photosystem II reaction center protein Z from Tupiella akineta (Green alga).